A 274-amino-acid polypeptide reads, in one-letter code: Penicillin-insensitive murein endopeptidase (274 aa).

The N-terminal stretch at 1-19 (MNKTAIALLALLASSVSLA) is a signal peptide. Cystine bridges form between C44/C265, C187/C235, and C216/C223. Zn(2+) contacts are provided by H110, H113, D120, D147, H150, and H211. A disordered region spans residues 227–274 (PLPPPGDGCGAELQSWFEPPKPGTTKPEKKTPPPLPPSCQALLDEHVI).

It belongs to the peptidase M74 family. As to quaternary structure, dimer. Zn(2+) serves as cofactor.

The protein localises to the periplasm. Functionally, murein endopeptidase that cleaves the D-alanyl-meso-2,6-diamino-pimelyl amide bond that connects peptidoglycan strands. Likely plays a role in the removal of murein from the sacculus. The polypeptide is Penicillin-insensitive murein endopeptidase (Shigella dysenteriae serotype 1 (strain Sd197)).